The chain runs to 453 residues: Gamma-glutamylpolyamine synthetase GlnA2 (453 aa).

The GS beta-grasp domain maps to 15-100; that stretch reads RDIRFVRLWF…MFCDILMPDG (86 aa). The GS catalytic domain occupies 107–453; that stretch reads PRYVLKRALA…FELRKSLPVL (347 aa). The Mg(2+) site is built by glutamate 130 and glutamate 132. Glutamate 182 is an ATP binding site. Positions 187 and 194 each coordinate Mg(2+). Residue glycine 239 coordinates L-glutamate. Histidine 243 contacts Mg(2+). Residue 245–247 participates in ATP binding; that stretch reads HLS. Positions 296, 310, and 322 each coordinate L-glutamate. Residues arginine 322 and arginine 327 each coordinate ATP. Glutamate 342 contacts Mg(2+). Position 344 (arginine 344) interacts with L-glutamate.

Belongs to the glutamine synthetase family. It depends on Mg(2+) as a cofactor.

The catalysed reaction is putrescine + L-glutamate + ATP = gamma-L-glutamylputrescine + ADP + phosphate + H(+). It catalyses the reaction spermine + L-glutamate + ATP = gamma-L-glutamylspermine + ADP + phosphate + H(+). The enzyme catalyses spermidine + L-glutamate + ATP = gamma-L-glutamylspermidine + ADP + phosphate + H(+). It carries out the reaction cadaverine + L-glutamate + ATP = gamma-L-glutamylcadaverine + ADP + phosphate + H(+). Its pathway is amine and polyamine degradation; putrescine degradation. The protein operates within amine and polyamine degradation; spermidine degradation. It functions in the pathway amine and polyamine degradation; spermine degradation. With respect to regulation, no effect on activity with glutamine synthetase (GS) inhibitor methionine sulfoximine (MSO). Its function is as follows. Involved in the catabolism of polyamines. Catalyzes the ATP-dependent gamma-glutamylation of polyamines. Substrates include putrescine, cadaverine, spermidine and spermine, with a preference for short-chain polyamine putrescine. No complementation of the L-glutamine auxotrophy of an E.coli glnA mutant. Together with GlnA3, enables survival of S.coelicolor under exposure to high local environmental polyamine concentrations, which is toxic to the cells. The protein is Gamma-glutamylpolyamine synthetase GlnA2 of Streptomyces coelicolor (strain ATCC BAA-471 / A3(2) / M145).